An 865-amino-acid chain; its full sequence is Valine--tRNA ligase (865 aa).

The short motif at 43–53 (PNITGRIHMGH) is the 'HIGH' region element. Positions 523–527 (KMSKS) match the 'KMSKS' region motif. An ATP-binding site is contributed by lysine 526. A coiled-coil region spans residues 797–865 (GLIDFEKEKE…RLESILRDLE (69 aa)).

The protein belongs to the class-I aminoacyl-tRNA synthetase family. ValS type 1 subfamily. As to quaternary structure, monomer.

It localises to the cytoplasm. The enzyme catalyses tRNA(Val) + L-valine + ATP = L-valyl-tRNA(Val) + AMP + diphosphate. Catalyzes the attachment of valine to tRNA(Val). As ValRS can inadvertently accommodate and process structurally similar amino acids such as threonine, to avoid such errors, it has a 'posttransfer' editing activity that hydrolyzes mischarged Thr-tRNA(Val) in a tRNA-dependent manner. This is Valine--tRNA ligase from Thermotoga maritima (strain ATCC 43589 / DSM 3109 / JCM 10099 / NBRC 100826 / MSB8).